Here is a 604-residue protein sequence, read N- to C-terminus: Glutamine--fructose-6-phosphate aminotransferase [isomerizing] (604 aa).

Residue C2 is the Nucleophile; for GATase activity of the active site. The Glutamine amidotransferase type-2 domain occupies 2–219; that stretch reads CGIMGAVSER…EGDSACVTTQ (218 aa). 2 SIS domains span residues 279-427 and 454-594; these read LRAS…DNRA and LASL…VDQP. The For Fru-6P isomerization activity role is filled by K599.

As to quaternary structure, homodimer.

Its subcellular location is the cytoplasm. The catalysed reaction is D-fructose 6-phosphate + L-glutamine = D-glucosamine 6-phosphate + L-glutamate. In terms of biological role, catalyzes the first step in hexosamine metabolism, converting fructose-6P into glucosamine-6P using glutamine as a nitrogen source. In Legionella pneumophila (strain Paris), this protein is Glutamine--fructose-6-phosphate aminotransferase [isomerizing].